The sequence spans 129 residues: UPF0325 protein PC1_0937 (129 aa).

Belongs to the UPF0325 family.

This chain is UPF0325 protein PC1_0937, found in Pectobacterium carotovorum subsp. carotovorum (strain PC1).